Here is a 380-residue protein sequence, read N- to C-terminus: Cytochrome b (380 aa).

Helical transmembrane passes span 34-54 (FGSL…LLAM), 78-99 (WLIR…YLHI), 114-134 (WNTG…GYVL), and 179-199 (FFAL…VHLT). Residues His84 and His98 each coordinate heme b. His183 and His197 together coordinate heme b. His202 is a binding site for a ubiquinone. Helical transmembrane passes span 227–247 (LKDI…ALFS), 289–309 (LGGV…PFLH), 321–341 (LSQL…WVGS), and 348–368 (FIII…ILFP).

Belongs to the cytochrome b family. As to quaternary structure, the cytochrome bc1 complex contains 11 subunits: 3 respiratory subunits (MT-CYB, CYC1 and UQCRFS1), 2 core proteins (UQCRC1 and UQCRC2) and 6 low-molecular weight proteins (UQCRH/QCR6, UQCRB/QCR7, UQCRQ/QCR8, UQCR10/QCR9, UQCR11/QCR10 and a cleavage product of UQCRFS1). This cytochrome bc1 complex then forms a dimer. Heme b serves as cofactor.

Its subcellular location is the mitochondrion inner membrane. In terms of biological role, component of the ubiquinol-cytochrome c reductase complex (complex III or cytochrome b-c1 complex) that is part of the mitochondrial respiratory chain. The b-c1 complex mediates electron transfer from ubiquinol to cytochrome c. Contributes to the generation of a proton gradient across the mitochondrial membrane that is then used for ATP synthesis. The protein is Cytochrome b (MT-CYB) of Procellaria parkinsoni (Black petrel).